A 624-amino-acid polypeptide reads, in one-letter code: DNA-directed RNA polymerase III subunit rpc-3 (624 aa).

Disordered stretches follow at residues 229 to 260 and 373 to 418; these read KRKL…EEDL and LAPK…ARMS. Residues 385 to 403 show a composition bias toward acidic residues; the sequence is DDSDDDEEDGDYSDSDEEM. The interval 551–572 is leucine-zipper; it reads CYATMVHCLQVLEVRRQKDKDV.

It belongs to the RNA polymerase beta chain family. In terms of assembly, component of the RNA polymerase III (Pol III) complex consisting of 17 subunits.

The protein localises to the nucleus. DNA-dependent RNA polymerase catalyzes the transcription of DNA into RNA using the four ribonucleoside triphosphates as substrates. Specific core component of RNA polymerase III which synthesizes small RNAs, such as 5S rRNA and tRNAs. The polypeptide is DNA-directed RNA polymerase III subunit rpc-3 (rpc-82) (Neurospora crassa (strain ATCC 24698 / 74-OR23-1A / CBS 708.71 / DSM 1257 / FGSC 987)).